Consider the following 132-residue polypeptide: Fatty acid-binding protein 9 (132 aa).

Phosphoserine occurs at positions 13, 14, 40, 42, 44, and 91.

Belongs to the calycin superfamily. Fatty-acid binding protein (FABP) family. As to expression, testis.

It is found in the cytoplasm. The protein is Fatty acid-binding protein 9 (Fabp9) of Mus musculus (Mouse).